Here is a 113-residue protein sequence, read N- to C-terminus: UPF0145 protein MTH_544 (113 aa).

Belongs to the UPF0145 family.

This is UPF0145 protein MTH_544 from Methanothermobacter thermautotrophicus (strain ATCC 29096 / DSM 1053 / JCM 10044 / NBRC 100330 / Delta H) (Methanobacterium thermoautotrophicum).